The sequence spans 60 residues: Large ribosomal subunit protein bL32 (60 aa).

It belongs to the bacterial ribosomal protein bL32 family.

This Thermosipho africanus (strain TCF52B) protein is Large ribosomal subunit protein bL32.